A 79-amino-acid chain; its full sequence is MPRRVLQGQVISAKSDKTIIVSVERRFKHPVYHKTVKIAKKYAVHDPDNLYNQGDKVKIIESRPISKTKCWHVIEDKGQ.

Belongs to the universal ribosomal protein uS17 family. As to quaternary structure, part of the 30S ribosomal subunit.

One of the primary rRNA binding proteins, it binds specifically to the 5'-end of 16S ribosomal RNA. The sequence is that of Small ribosomal subunit protein uS17 from Orientia tsutsugamushi (strain Ikeda) (Rickettsia tsutsugamushi).